The primary structure comprises 290 residues: Small ribosomal subunit biogenesis GTPase RsgA (290 aa).

The 158-residue stretch at 63-220 folds into the CP-type G domain; that stretch reads KNELIRPPIA…IADTPGFSNL (158 aa). GTP is bound by residues 112-115 and 162-170; these read NKFD and GPSGVGKST. Zn(2+) is bound by residues cysteine 244, cysteine 249, histidine 251, and cysteine 257.

It belongs to the TRAFAC class YlqF/YawG GTPase family. RsgA subfamily. In terms of assembly, monomer. Associates with 30S ribosomal subunit, binds 16S rRNA. The cofactor is Zn(2+).

It localises to the cytoplasm. In terms of biological role, one of several proteins that assist in the late maturation steps of the functional core of the 30S ribosomal subunit. Helps release RbfA from mature subunits. May play a role in the assembly of ribosomal proteins into the subunit. Circularly permuted GTPase that catalyzes slow GTP hydrolysis, GTPase activity is stimulated by the 30S ribosomal subunit. The sequence is that of Small ribosomal subunit biogenesis GTPase RsgA from Carboxydothermus hydrogenoformans (strain ATCC BAA-161 / DSM 6008 / Z-2901).